The chain runs to 100 residues: UPF0235 protein Cvib_0403 (100 aa).

This sequence belongs to the UPF0235 family.

This Chlorobium phaeovibrioides (strain DSM 265 / 1930) (Prosthecochloris vibrioformis (strain DSM 265)) protein is UPF0235 protein Cvib_0403.